The chain runs to 100 residues: Probable antitoxin MazE4 (100 aa).

The segment at 77–100 (PYESEAERSAARARRNARQQRSAQ) is disordered.

As to quaternary structure, forms a complex with cognate toxin MazF4.

Antitoxin component of a type II toxin-antitoxin (TA) system. Labile antitoxin that binds to cognate MazF4 toxin and counteracts its endoribonuclease activity. This is Probable antitoxin MazE4 (mazE4) from Mycobacterium tuberculosis (strain CDC 1551 / Oshkosh).